Reading from the N-terminus, the 313-residue chain is Hydroxyacylglutathione hydrolase, mitochondrial (313 aa).

6 residues coordinate Zn(2+): H107, H109, D111, H112, H163, and D187. Residues 196-198 (KFF) and 226-228 (HEY) contribute to the substrate site. H226 is a Zn(2+) binding site. Composition is skewed to basic and acidic residues over residues 285–294 (VQEHAGERDP) and 301–313 (IRKEKDHFKVPKD). The segment at 285-313 (VQEHAGERDPISTMGAIRKEKDHFKVPKD) is disordered. 302–305 (RKEK) provides a ligand contact to substrate.

It belongs to the metallo-beta-lactamase superfamily. Glyoxalase II family. Monomer. Requires Zn(2+) as cofactor.

It localises to the mitochondrion matrix. It is found in the cytoplasm. It catalyses the reaction an S-(2-hydroxyacyl)glutathione + H2O = a 2-hydroxy carboxylate + glutathione + H(+). The enzyme catalyses (R)-S-lactoylglutathione + H2O = (R)-lactate + glutathione + H(+). Thiolesterase that catalyzes the hydrolysis of S-D-lactoyl-glutathione to form glutathione and D-lactic acid. The chain is Hydroxyacylglutathione hydrolase, mitochondrial (hagh) from Xenopus tropicalis (Western clawed frog).